A 492-amino-acid chain; its full sequence is B3 domain-containing protein REM3 (492 aa).

The segment at residues 12–104 (NRPFFVRSLA…VFHVTPSGRS (93 aa)) is a DNA-binding region (TF-B3 1). Residues 105–116 (FSQIRTSSSSGD) are compositionally biased toward low complexity. Positions 105-134 (FSQIRTSSSSGDYDSDDDDDEAGDDDSDSK) are disordered. A compositionally biased stretch (acidic residues) spans 117–131 (YDSDDDDDEAGDDDS). DNA-binding regions (TF-B3) lie at residues 154–250 (YCLL…LCFK) and 286–382 (FLTV…FCSE). The span at 385-395 (IEQEEAPEERG) shows a compositional bias: basic and acidic residues. The tract at residues 385–427 (IEQEEAPEERGTPLPKRARVSAEVGHSRRTQAPNKSSDDPKIL) is disordered.

It localises to the nucleus. In Arabidopsis thaliana (Mouse-ear cress), this protein is B3 domain-containing protein REM3 (REM3).